A 465-amino-acid chain; its full sequence is Nuclear pore complex protein NUP50B (465 aa).

Disordered stretches follow at residues methionine 1–threonine 44 and arginine 59–histidine 244. The residue at position 2 (glycine 2) is an N-acetylglycine. Residues glycine 26–serine 35 are compositionally biased toward acidic residues. Over residues proline 81 to proline 97 the composition is skewed to low complexity. Basic and acidic residues-rich tracts occupy residues threonine 105–alanine 127, isoleucine 141–serine 157, and threonine 216–glycine 233. Serine 125 carries the phosphoserine modification. 3 consecutive repeat copies span residues phenylalanine 266–glycine 267, phenylalanine 286–glycine 287, and phenylalanine 297–glycine 298. Residues phenylalanine 266–glycine 298 form a 3 X 2 AA repeats of F-G region. Disordered stretches follow at residues lysine 308–asparagine 330 and histidine 439–alanine 465. Phosphothreonine is present on threonine 455. Residues proline 456–alanine 465 show a composition bias toward polar residues. A Phosphoserine modification is found at serine 459.

In terms of assembly, part of the nuclear pore complex (NPC). The NPC has an eight-fold symmetrical structure comprising a central transport channel and two rings, the cytoplasmic and nuclear rings, to which eight filaments are attached. The cytoplasmic filaments have loose ends, while the nuclear filaments are joined in a distal ring, forming a nuclear basket. NPCs are highly dynamic in configuration and composition, and can be devided in 3 subcomplexes, the NUP62 subcomplex, the NUP107-160 subcomplex and the NUP93 subcomplex, containing approximately 30 different nucleoporin proteins.

The protein resides in the nucleus. The protein localises to the nucleoplasm. It localises to the nuclear pore complex. Its function is as follows. Probably involved in nucleocytoplasmic transport via its interactions with importins and Ran, rather than by forming part of the nuclear pore complex (NPC) scaffolding. This chain is Nuclear pore complex protein NUP50B, found in Arabidopsis thaliana (Mouse-ear cress).